We begin with the raw amino-acid sequence, 554 residues long: Dihydroxy-acid dehydratase (554 aa).

Aspartate 78 contributes to the Mg(2+) binding site. Residue cysteine 119 participates in [2Fe-2S] cluster binding. Residues aspartate 120 and lysine 121 each coordinate Mg(2+). Residue lysine 121 is modified to N6-carboxylysine. Cysteine 191 contributes to the [2Fe-2S] cluster binding site. Glutamate 442 lines the Mg(2+) pocket. The active-site Proton acceptor is the serine 468.

It belongs to the IlvD/Edd family. As to quaternary structure, homodimer. It depends on [2Fe-2S] cluster as a cofactor. Mg(2+) serves as cofactor.

It carries out the reaction (2R)-2,3-dihydroxy-3-methylbutanoate = 3-methyl-2-oxobutanoate + H2O. It catalyses the reaction (2R,3R)-2,3-dihydroxy-3-methylpentanoate = (S)-3-methyl-2-oxopentanoate + H2O. Its pathway is amino-acid biosynthesis; L-isoleucine biosynthesis; L-isoleucine from 2-oxobutanoate: step 3/4. It participates in amino-acid biosynthesis; L-valine biosynthesis; L-valine from pyruvate: step 3/4. Its function is as follows. Functions in the biosynthesis of branched-chain amino acids. Catalyzes the dehydration of (2R,3R)-2,3-dihydroxy-3-methylpentanoate (2,3-dihydroxy-3-methylvalerate) into 2-oxo-3-methylpentanoate (2-oxo-3-methylvalerate) and of (2R)-2,3-dihydroxy-3-methylbutanoate (2,3-dihydroxyisovalerate) into 2-oxo-3-methylbutanoate (2-oxoisovalerate), the penultimate precursor to L-isoleucine and L-valine, respectively. The protein is Dihydroxy-acid dehydratase of Thermotoga sp. (strain RQ2).